The sequence spans 708 residues: Leucine-rich repeat neuronal protein 3 (708 aa).

Residues 1–22 form the signal peptide; sequence MKDMPLQIHVLLGLAITTLVQA. The region spanning 23 to 69 is the LRRNT domain; sequence VDKKVDCPQLCTCEIRPWFTPTSIYMEASTVDCNDLGLLTFPARLPA. Residues 23 to 628 lie on the Extracellular side of the membrane; the sequence is VDKKVDCPQL…KEYEKSNTTT (606 aa). 12 LRR repeats span residues 70-91, 93-114, 117-138, 141-162, 165-186, 189-210, 213-234, 237-258, 261-282, 285-304, 310-332, and 335-358; these read NTQI…TDFP, NLTG…NVKK, QLLS…CLSE, NLQE…AFIG, NLLR…WFDA, NLEI…NFKP, NLRS…ALVG, NLES…ALQK, NLKF…DFSN, HLKE…DSLA, DLRK…AFFR, and KLES…ESLP. N-linked (GlcNAc...) asparagine glycosylation is found at Asn-93 and Asn-103. N-linked (GlcNAc...) asparagine glycosylation is present at Asn-223. An LRRCT domain is found at 368 to 421; the sequence is NPIRCDCVIRWINMNKTNIRFMEPDSLFCVDPPEFQGQNVRQVHFRDMMEICLP. An N-linked (GlcNAc...) asparagine glycan is attached at Asn-382. Positions 421–514 constitute an Ig-like C2-type domain; that stretch reads PLIAPESFPS…DLKSVMIKVD (94 aa). Residues Cys-444 and Cys-496 are joined by a disulfide bond. N-linked (GlcNAc...) asparagine glycans are attached at residues Asn-522, Asn-579, Asn-608, and Asn-625. The region spanning 523–617 is the Fibronectin type-III domain; it reads GSLNIKIRDI…NVTTKGLDPD (95 aa). Residues 629 to 649 traverse the membrane as a helical segment; that stretch reads LMACLGGLLGIIGVICLISCL. The Cytoplasmic segment spans residues 650–708; sequence SPEMNCDGGHSYVRNYLQKPTFALGELYPPLINLWEAGKEKSTSLKVKATVIGLPTNMS.

It localises to the membrane. This chain is Leucine-rich repeat neuronal protein 3 (LRRN3), found in Pongo abelii (Sumatran orangutan).